Reading from the N-terminus, the 584-residue chain is 2-succinyl-5-enolpyruvyl-6-hydroxy-3-cyclohexene-1-carboxylate synthase (584 aa).

This sequence belongs to the TPP enzyme family. MenD subfamily. As to quaternary structure, homodimer. Mg(2+) is required as a cofactor. Mn(2+) serves as cofactor. It depends on thiamine diphosphate as a cofactor.

It carries out the reaction isochorismate + 2-oxoglutarate + H(+) = 5-enolpyruvoyl-6-hydroxy-2-succinyl-cyclohex-3-ene-1-carboxylate + CO2. It participates in quinol/quinone metabolism; 1,4-dihydroxy-2-naphthoate biosynthesis; 1,4-dihydroxy-2-naphthoate from chorismate: step 2/7. It functions in the pathway quinol/quinone metabolism; menaquinone biosynthesis. Catalyzes the thiamine diphosphate-dependent decarboxylation of 2-oxoglutarate and the subsequent addition of the resulting succinic semialdehyde-thiamine pyrophosphate anion to isochorismate to yield 2-succinyl-5-enolpyruvyl-6-hydroxy-3-cyclohexene-1-carboxylate (SEPHCHC). The protein is 2-succinyl-5-enolpyruvyl-6-hydroxy-3-cyclohexene-1-carboxylate synthase of Bacillus thuringiensis (strain Al Hakam).